We begin with the raw amino-acid sequence, 802 residues long: Outer membrane usher protein CssD (802 aa).

Belongs to the fimbrial export usher family.

It localises to the cell outer membrane. Its function is as follows. Involved in the export and assembly of C6 fimbrial subunits across the outer membrane. The chain is Outer membrane usher protein CssD (cssD) from Escherichia coli.